Here is a 473-residue protein sequence, read N- to C-terminus: Mitochondrial adenyl nucleotide antiporter SLC25A24-A (473 aa).

Residues 1 to 173 are regulatory N-terminal domain; it reads MLEQVQKFLL…RFWKHSTVLD (173 aa). Residues 1–197 are Mitochondrial intermembrane-facing; the sequence is MLEQVQKFLL…EKKTGQWWKH (197 aa). EF-hand domains follow at residues 19 to 54, 55 to 88, 86 to 121, and 122 to 157; these read DSHT…MGMA, VGKG…EEHE, EHEK…LGIN, and ISLD…NPAD. Ca(2+) contacts are provided by D32, N34, D36, K38, E43, D68, N70, D72, H74, E79, D99, N101, D103, K105, E110, D135, D137, T139, T141, and E146. Positions 159 to 168 are linker region; that stretch reads IQQIIRFWKH. The tract at residues 174-473 is C-terminal transmembrane transporter domain; the sequence is IGDSLTIPDE…YEKMKIQLGI (300 aa). 3 Solcar repeats span residues 192 to 277, 285 to 370, and 382 to 470; these read GQWW…YKKL, LGTA…LKNY, and PGVL…MKIQ. The helical transmembrane segment at 198–215 threads the bilayer; it reads LLAGGMAGAVSRTGTAPL. At 216 to 251 the chain is on the mitochondrial matrix side; the sequence is DRLKVMMQVHGTKGNSNIITGLKQMVKEGGVRSLWR. Residues 252–271 form a helical membrane-spanning segment; the sequence is GNGVNVIKIAPETAMKFWAY. Residues 272-294 are Mitochondrial intermembrane-facing; the sequence is EQYKKLFTSESGKLGTAERFIAG. The chain crosses the membrane as a helical span at residues 295-308; it reads SLAGATAQTSIYPM. Residues 309–344 are Mitochondrial matrix-facing; sequence EVLKTRLAVGKTGQYSGMFDCAKKIMQKEGILAFYK. The chain crosses the membrane as a helical span at residues 345–364; it reads GYIPNILGIIPYAGIDLAIY. Residues 365–387 lie on the Mitochondrial intermembrane side of the membrane; sequence ETLKNYWLQNYAKDSANPGVLVL. The helical transmembrane segment at 388–405 threads the bilayer; sequence LGCGTVSSTCGQLASYPL. The Mitochondrial matrix segment spans residues 406–444; it reads ALIRTRMQAQASIEGAPQLNMGGLFRKIVAKEGFFGLYT. A helical membrane pass occupies residues 445-464; the sequence is GIAPNFLKVLPAVSISYVVY. Topologically, residues 465–473 are mitochondrial intermembrane; the sequence is EKMKIQLGI.

The protein belongs to the mitochondrial carrier (TC 2.A.29) family. In terms of assembly, monomer.

It is found in the mitochondrion inner membrane. It catalyses the reaction Mg(2+)(out) + phosphate(in) + ATP(out) = Mg(2+)(in) + phosphate(out) + ATP(in). It carries out the reaction ADP(out) + phosphate(in) + H(+)(out) = ADP(in) + phosphate(out) + H(+)(in). The enzyme catalyses AMP(out) + phosphate(in) = AMP(in) + phosphate(out). The catalysed reaction is phosphate(in) + ATP(out) + 2 H(+)(out) = phosphate(out) + ATP(in) + 2 H(+)(in). It catalyses the reaction dADP(in) + ADP(out) = dADP(out) + ADP(in). It carries out the reaction Mg(2+)(in) + ADP(out) + ATP(in) + H(+)(out) = Mg(2+)(out) + ADP(in) + ATP(out) + H(+)(in). The enzyme catalyses ADP(out) + diphosphate(in) = ADP(in) + diphosphate(out). The catalysed reaction is dAMP(in) + ADP(out) + H(+)(out) = dAMP(out) + ADP(in) + H(+)(in). It catalyses the reaction 3'-AMP(in) + ADP(out) + H(+)(out) = 3'-AMP(out) + ADP(in) + H(+)(in). It carries out the reaction dAMP(out) + phosphate(in) = dAMP(in) + phosphate(out). The enzyme catalyses 3'-AMP(out) + phosphate(in) = 3'-AMP(in) + phosphate(out). The catalysed reaction is dADP(out) + phosphate(in) + H(+)(out) = dADP(in) + phosphate(out) + H(+)(in). Activated by an increase in cytosolic calcium levels that induce a conformational change of the N-terminal regulatory domain, uncapping the channel and allowing transport. Inhibited by bathophenanthroline, mersalyl, p-hydroxymercuribenzoate, bromcresol purple and tannic acid. Its function is as follows. Electroneutral antiporter that mediates the transport of adenyl nucleotides through the inner mitochondrial membrane. Originally identified as an ATP-magnesium/inorganic phosphate antiporter, it also acts as a broad specificity adenyl nucleotide antiporter. By regulating the mitochondrial matrix adenyl nucleotide pool could adapt to changing cellular energetic demands and indirectly regulate adenyl nucleotide-dependent metabolic pathways. The polypeptide is Mitochondrial adenyl nucleotide antiporter SLC25A24-A (slc25a24-a) (Xenopus laevis (African clawed frog)).